A 540-amino-acid polypeptide reads, in one-letter code: Glucose-6-phosphate isomerase (540 aa).

The Proton donor role is filled by glutamate 346. Residues histidine 377 and lysine 505 contribute to the active site.

Belongs to the GPI family.

The protein resides in the cytoplasm. The catalysed reaction is alpha-D-glucose 6-phosphate = beta-D-fructose 6-phosphate. It participates in carbohydrate biosynthesis; gluconeogenesis. The protein operates within carbohydrate degradation; glycolysis; D-glyceraldehyde 3-phosphate and glycerone phosphate from D-glucose: step 2/4. Its function is as follows. Catalyzes the reversible isomerization of glucose-6-phosphate to fructose-6-phosphate. The chain is Glucose-6-phosphate isomerase from Francisella tularensis subsp. holarctica (strain FTNF002-00 / FTA).